Reading from the N-terminus, the 433-residue chain is MKLTQATTLLLSLGLSLPVEGFSLSRTNAVGPKPPFRPLPASTPRNKTCQVQSNGDGTDDAPYILAALKQCNNGGKVVFAEDKEYTIGTALDMTFLKHVDLEILGKITFTPDTDYWQENSFKHTFQNATTFFNLGGTDVNVYGGGELNGNGQVWYDLYAEDALILRPILVGIIGLHGGTIGPLKLRYSPQWYQLVANSSDVLFDGIDISGYSSSENEAKNTDGWDTYRSSNIVIQNSVINNGDDCVSFKPNSTEILVQNLHCNGSHGISVGSLGQYQGEVDIVQNVLVYNISMYNASDMARIKVWPGISSAMSEDLQGGGGLGSVQNITYDKMYIENVDWAIEVTQCYGQKNQTLCNENPSNLTISDVYFNDLTGVTSGKNDPNVGTIICSSPDVCSGIHATNIDVKSPDGDSGFVCTNVDEEFLDVECASSS.

The first 21 residues, 1–21 (MKLTQATTLLLSLGLSLPVEG), serve as a signal peptide directing secretion. The interval 30 to 54 (VGPKPPFRPLPASTPRNKTCQVQSN) is disordered. Residues 43-54 (TPRNKTCQVQSN) show a composition bias toward polar residues. N-linked (GlcNAc...) asparagine glycans are attached at residues asparagine 46, asparagine 127, and asparagine 197. The stretch at 229-250 (SSNIVIQNSVINNGDDCVSFKP) is one PbH1 1 repeat. The active-site Proton donor is the aspartate 243. Residues cysteine 245 and cysteine 262 are joined by a disulfide bond. Asparagine 251 and asparagine 263 each carry an N-linked (GlcNAc...) asparagine glycan. One copy of the PbH1 2 repeat lies at 252-272 (STEILVQNLHCNGSHGISVGS). Residue histidine 266 is part of the active site. N-linked (GlcNAc...) asparagine glycans are attached at residues asparagine 290, asparagine 295, asparagine 327, asparagine 352, and asparagine 362. The PbH1 3 repeat unit spans residues 325 to 346 (VQNITYDKMYIENVDWAIEVTQ). One copy of the PbH1 4 repeat lies at 360–403 (PSNLTISDVYFNDLTGVTSGKNDPNVGTIICSSPDVCSGIHATN). Cysteines 390 and 396 form a disulfide.

The protein belongs to the glycosyl hydrolase 28 family.

The protein localises to the secreted. It catalyses the reaction [(1-&gt;4)-alpha-D-galacturonosyl](n) + H2O = alpha-D-galacturonate + [(1-&gt;4)-alpha-D-galacturonosyl](n-1). Its function is as follows. Specific in hydrolyzing the terminal glycosidic bond of polygalacturonic acid and oligogalacturonates. This Aspergillus flavus (strain ATCC 200026 / FGSC A1120 / IAM 13836 / NRRL 3357 / JCM 12722 / SRRC 167) protein is Probable exopolygalacturonase X (pgaX).